We begin with the raw amino-acid sequence, 634 residues long: tRNA uridine 5-carboxymethylaminomethyl modification enzyme MnmG (634 aa).

An FAD-binding site is contributed by 13–18 (GAGHAG). 273–287 (GPRYCPSIEDKIIKF) is an NAD(+) binding site.

Belongs to the MnmG family. As to quaternary structure, homodimer. Heterotetramer of two MnmE and two MnmG subunits. Requires FAD as cofactor.

The protein resides in the cytoplasm. In terms of biological role, NAD-binding protein involved in the addition of a carboxymethylaminomethyl (cmnm) group at the wobble position (U34) of certain tRNAs, forming tRNA-cmnm(5)s(2)U34. The sequence is that of tRNA uridine 5-carboxymethylaminomethyl modification enzyme MnmG from Buchnera aphidicola subsp. Cinara cedri (strain Cc).